We begin with the raw amino-acid sequence, 325 residues long: Tetraacyldisaccharide 4'-kinase (325 aa).

55 to 62 (TAGGNGKT) is a binding site for ATP.

This sequence belongs to the LpxK family.

It catalyses the reaction a lipid A disaccharide + ATP = a lipid IVA + ADP + H(+). It participates in glycolipid biosynthesis; lipid IV(A) biosynthesis; lipid IV(A) from (3R)-3-hydroxytetradecanoyl-[acyl-carrier-protein] and UDP-N-acetyl-alpha-D-glucosamine: step 6/6. Transfers the gamma-phosphate of ATP to the 4'-position of a tetraacyldisaccharide 1-phosphate intermediate (termed DS-1-P) to form tetraacyldisaccharide 1,4'-bis-phosphate (lipid IVA). This Salmonella agona (strain SL483) protein is Tetraacyldisaccharide 4'-kinase.